The sequence spans 280 residues: uncharacterized protein (280 aa).

Tyr-54 (proton donor) is an active-site residue. A substrate-binding site is contributed by His-116. 194 to 246 (SPLMQGQLLDHPVLADIAQTYNKSVAQIILRWDLQHGIITIPKSTKEHRIKEN) serves as a coordination point for NADP(+).

Belongs to the aldo/keto reductase family.

This is an uncharacterized protein from Bacillus subtilis (strain 168).